Here is a 223-residue protein sequence, read N- to C-terminus: Endonuclease V (223 aa).

Mg(2+) contacts are provided by aspartate 35 and aspartate 103.

The protein belongs to the endonuclease V family. Mg(2+) is required as a cofactor.

The protein resides in the cytoplasm. It carries out the reaction Endonucleolytic cleavage at apurinic or apyrimidinic sites to products with a 5'-phosphate.. Functionally, DNA repair enzyme involved in the repair of deaminated bases. Selectively cleaves double-stranded DNA at the second phosphodiester bond 3' to a deoxyinosine leaving behind the intact lesion on the nicked DNA. In Shigella dysenteriae serotype 1 (strain Sd197), this protein is Endonuclease V.